Reading from the N-terminus, the 428-residue chain is 3-deoxy-D-manno-octulosonic acid transferase (428 aa).

Residue E64 is the Proton acceptor of the active site. CMP is bound by residues 274-275 (PR), 316-318 (LGE), and 342-345 (NLIE).

This sequence belongs to the glycosyltransferase group 1 family. Glycosyltransferase 30 subfamily.

It localises to the cell inner membrane. It carries out the reaction lipid IVA (E. coli) + CMP-3-deoxy-beta-D-manno-octulosonate = alpha-Kdo-(2-&gt;6)-lipid IVA (E. coli) + CMP + H(+). It functions in the pathway bacterial outer membrane biogenesis; LPS core biosynthesis. Its function is as follows. Involved in lipopolysaccharide (LPS) biosynthesis. Catalyzes the transfer of a single 3-deoxy-D-manno-octulosonate (Kdo) residue from CMP-Kdo to lipid IV(A), the tetraacyldisaccharide-1,4'-bisphosphate precursor of lipid A. In Bordetella pertussis, this protein is 3-deoxy-D-manno-octulosonic acid transferase (waaA).